The following is a 254-amino-acid chain: tRNA uridine(34) hydroxylase (254 aa).

The region spanning 123 to 217 is the Rhodanese domain; sequence QDPNVILLDT…YLESIPESES (95 aa). Cysteine 177 functions as the Cysteine persulfide intermediate in the catalytic mechanism.

Belongs to the TrhO family.

The catalysed reaction is uridine(34) in tRNA + AH2 + O2 = 5-hydroxyuridine(34) in tRNA + A + H2O. Functionally, catalyzes oxygen-dependent 5-hydroxyuridine (ho5U) modification at position 34 in tRNAs. The polypeptide is tRNA uridine(34) hydroxylase (Legionella pneumophila (strain Paris)).